The following is a 473-amino-acid chain: Photosystem II CP43 reaction center protein (473 aa).

Positions 1 to 14 are excised as a propeptide; sequence MKTLYSLRRFYPVE. An N-acetylthreonine modification is found at Thr-15. Thr-15 carries the post-translational modification Phosphothreonine. Helical transmembrane passes span 69–93, 134–155, 178–200, 255–275, and 291–312; these read LFEV…PHLA, LLGP…KDRN, KALY…RKIT, KPFA…LSYS, and WFNN…ASQA. Glu-367 serves as a coordination point for [CaMn4O5] cluster. Residues 447–471 traverse the membrane as a helical segment; sequence RARAAAAGFEKGIDRDFEPVLSMTP.

Belongs to the PsbB/PsbC family. PsbC subfamily. As to quaternary structure, PSII is composed of 1 copy each of membrane proteins PsbA, PsbB, PsbC, PsbD, PsbE, PsbF, PsbH, PsbI, PsbJ, PsbK, PsbL, PsbM, PsbT, PsbX, PsbY, PsbZ, Psb30/Ycf12, at least 3 peripheral proteins of the oxygen-evolving complex and a large number of cofactors. It forms dimeric complexes. It depends on Binds multiple chlorophylls and provides some of the ligands for the Ca-4Mn-5O cluster of the oxygen-evolving complex. It may also provide a ligand for a Cl- that is required for oxygen evolution. PSII binds additional chlorophylls, carotenoids and specific lipids. as a cofactor.

It localises to the plastid. The protein localises to the chloroplast thylakoid membrane. In terms of biological role, one of the components of the core complex of photosystem II (PSII). It binds chlorophyll and helps catalyze the primary light-induced photochemical processes of PSII. PSII is a light-driven water:plastoquinone oxidoreductase, using light energy to abstract electrons from H(2)O, generating O(2) and a proton gradient subsequently used for ATP formation. The sequence is that of Photosystem II CP43 reaction center protein from Morus indica (Mulberry).